We begin with the raw amino-acid sequence, 436 residues long: Putative ankyrin repeat protein FPV245 (436 aa).

10 ANK repeats span residues 1 to 30 (MSVD…CINI), 34 to 63 (ETTT…QVNH), 67 to 96 (KIPN…DTSI), 98 to 119 (PVPC…KVNT), 123 to 152 (KSKT…DVNI), 156 to 185 (NGCY…YANV), 189 to 218 (YGNS…NISN), 222 to 252 (NGVT…DTDV), 253 to 283 (DGYT…DISI), and 287 to 317 (NGRN…LINE).

The polypeptide is Putative ankyrin repeat protein FPV245 (Vertebrata (FPV)).